The chain runs to 204 residues: Small ribosomal subunit protein uS4 (204 aa).

The 62-residue stretch at Arg92–Ile153 folds into the S4 RNA-binding domain.

This sequence belongs to the universal ribosomal protein uS4 family. In terms of assembly, part of the 30S ribosomal subunit. Contacts protein S5. The interaction surface between S4 and S5 is involved in control of translational fidelity.

Functionally, one of the primary rRNA binding proteins, it binds directly to 16S rRNA where it nucleates assembly of the body of the 30S subunit. With S5 and S12 plays an important role in translational accuracy. This is Small ribosomal subunit protein uS4 from Streptomyces coelicolor (strain ATCC BAA-471 / A3(2) / M145).